A 766-amino-acid polypeptide reads, in one-letter code: MALAHTLGFPRIGRDRELKKAQEAFWKGELDEAGLRAVGRQLRAAHWQVQKDAGIQLLPVGDFAWYDQVLTHSLTFGVIPERFRAHGEAGPTLHTLFGMARGVSDDSCCGGAHAQEMTKWFDTNYHYLVPEFSADQQFQLSWEQLFEEVDEARALGHQVKPVLIGPLTYLWLGKGKGAEFDRLDLLDRLLPLYGQILRRLAGQGVEWVQIDEPILVLDLPQAWKNAFERAYNLLQSEPLKKLVATYFGGLEDNLGLAANLPVDGLHIDLVRAPEQYPSILDRLPAYKVVSLGLVNGRNVWRCDLEKALEVVRHARERLGERLWVAPSCSLLHSPVDLEREDGLDAELKSWLAFAVQKCREVAVLARAATEPEAAEVLAALEESRAVQASRASSPRIHKPAVQARLAAIKASDAQRRSPFAERIARQRAGLDLPAFPTTTIGSFPQTSSIRLARQSFKQGKLSEAEYIEAMHSEIRHAVQIQEQLGLDVLVHGEAERNDMVEYFAEQLDGYVFTRFGWVQSYGSRCVKPAVIYGDLSRPRAMTVEWIRYAQSLTDKVMKGMLTGPVTMLMWSFPREDVSREVQARQLALAIRDEVVDLEAAGIRIVQIDEAAFREGLPLRRNAWPHYLEWATEAFRLCASGVRDETQIHTHMCYSEFNDVIESIAAMDADVITIETSRSDMELLEAFEQFDYPNEIGPGVYDIHSPRVPSREEIVALLRKAARRIPAERLWVNPDCGLKTRAWPETEAALVNMVAAARELRGDLARG.

Residues 16–19 (RELK) and K119 each bind 5-methyltetrahydropteroyltri-L-glutamate. Residues 440–442 (IGS) and E493 each bind L-homocysteine. Residues 440–442 (IGS) and E493 contribute to the L-methionine site. 5-methyltetrahydropteroyltri-L-glutamate-binding positions include 524-525 (RC) and W570. Residue D608 participates in L-homocysteine binding. Residue D608 coordinates L-methionine. E614 serves as a coordination point for 5-methyltetrahydropteroyltri-L-glutamate. Positions 650, 652, and 674 each coordinate Zn(2+). H703 (proton donor) is an active-site residue. C735 lines the Zn(2+) pocket.

This sequence belongs to the vitamin-B12 independent methionine synthase family. Requires Zn(2+) as cofactor.

The enzyme catalyses 5-methyltetrahydropteroyltri-L-glutamate + L-homocysteine = tetrahydropteroyltri-L-glutamate + L-methionine. The protein operates within amino-acid biosynthesis; L-methionine biosynthesis via de novo pathway; L-methionine from L-homocysteine (MetE route): step 1/1. In terms of biological role, catalyzes the transfer of a methyl group from 5-methyltetrahydrofolate to homocysteine resulting in methionine formation. In Pseudomonas aeruginosa (strain LESB58), this protein is 5-methyltetrahydropteroyltriglutamate--homocysteine methyltransferase.